The sequence spans 129 residues: MEKLEQIVNEIEQLTVAELAELVKMLEDKFGVSASAPVMAMPVAGAAAGGGAAAEEKTEFDVVLKSFGAKKINVIKVVREITGLGLKEAKDLVEKAGTPDAVIKQGVNKDEAEEIKKKLEEAGAEVELK.

This sequence belongs to the bacterial ribosomal protein bL12 family. Homodimer. Part of the ribosomal stalk of the 50S ribosomal subunit. Forms a multimeric L10(L12)X complex, where L10 forms an elongated spine to which 2 to 4 L12 dimers bind in a sequential fashion. Binds GTP-bound translation factors.

Its function is as follows. Forms part of the ribosomal stalk which helps the ribosome interact with GTP-bound translation factors. Is thus essential for accurate translation. In Thermosipho melanesiensis (strain DSM 12029 / CIP 104789 / BI429), this protein is Large ribosomal subunit protein bL12.